We begin with the raw amino-acid sequence, 120 residues long: Protein crumbs homolog 3 (120 aa).

Residues 1–26 (MANPGLGLLLALGLPFLLARWGRAWG) form the signal peptide. The Extracellular portion of the chain corresponds to 27–59 (QIQTTSANENSTVLPSSTSSSSDGNLRPEAITA). Residue asparagine 36 is glycosylated (N-linked (GlcNAc...) asparagine). A helical membrane pass occupies residues 60–80 (IIVVFSLLAALLLAVGLALLV). The Cytoplasmic segment spans residues 81-120 (RKLREKRQTEGTYRPSSEEQVGARVPPTPNLKLPPEERLI). Residues 84–120 (REKRQTEGTYRPSSEEQVGARVPPTPNLKLPPEERLI) form an interaction with EPB41L5 region. The interval 87–120 (RQTEGTYRPSSEEQVGARVPPTPNLKLPPEERLI) is disordered. A compositionally biased stretch (polar residues) spans 90-99 (EGTYRPSSEE). The short motif at 117–120 (ERLI) is the PDZ-binding element.

As to quaternary structure, component of a complex composed of CRB3, PALS1 and PATJ. Interacts (via C-terminus) with PALS1 (via PDZ domain). Interacts with PARD6A. Interacts (via intracellular domain) with EPB41L5. Interacts with WDR83. In terms of tissue distribution, preferentially expressed in epithelial tissues. Expressed at high levels in lung, kidney, and colon. Expressed at high levels in retina, colon and mammary glands. Moderately expressed in liver, spleen, pancreas and prostate. Moderately to weakly expressed in the placenta. Weakly expressed in skeletal muscle and small intestine.

It localises to the apical cell membrane. Its subcellular location is the cell junction. It is found in the tight junction. Its function is as follows. Involved in the establishment of cell polarity in mammalian epithelial cells. Regulates the morphogenesis of tight junctions. Involved in promoting phosphorylation and cytoplasmic retention of transcriptional coactivators YAP1 and WWTR1/TAZ which leads to suppression of TGFB1-dependent transcription of target genes such as CCN2/CTGF, SERPINE1/PAI1, SNAI1/SNAIL1 and SMAD7. In Homo sapiens (Human), this protein is Protein crumbs homolog 3.